The primary structure comprises 382 residues: Dual-specificity RNA methyltransferase RlmN (382 aa).

The active-site Proton acceptor is the Glu91. The Radical SAM core domain occupies 97-339; the sequence is ETDRGTLCIS…TTVRKTRGDD (243 aa). Cys104 and Cys344 are oxidised to a cystine. The [4Fe-4S] cluster site is built by Cys111, Cys115, and Cys118. S-adenosyl-L-methionine is bound by residues 165 to 166, Ser197, 219 to 221, and Asn301; these read GE and SLH. Catalysis depends on Cys344, which acts as the S-methylcysteine intermediate.

Belongs to the radical SAM superfamily. RlmN family. Requires [4Fe-4S] cluster as cofactor.

It is found in the cytoplasm. The catalysed reaction is adenosine(2503) in 23S rRNA + 2 reduced [2Fe-2S]-[ferredoxin] + 2 S-adenosyl-L-methionine = 2-methyladenosine(2503) in 23S rRNA + 5'-deoxyadenosine + L-methionine + 2 oxidized [2Fe-2S]-[ferredoxin] + S-adenosyl-L-homocysteine. It carries out the reaction adenosine(37) in tRNA + 2 reduced [2Fe-2S]-[ferredoxin] + 2 S-adenosyl-L-methionine = 2-methyladenosine(37) in tRNA + 5'-deoxyadenosine + L-methionine + 2 oxidized [2Fe-2S]-[ferredoxin] + S-adenosyl-L-homocysteine. In terms of biological role, specifically methylates position 2 of adenine 2503 in 23S rRNA and position 2 of adenine 37 in tRNAs. m2A2503 modification seems to play a crucial role in the proofreading step occurring at the peptidyl transferase center and thus would serve to optimize ribosomal fidelity. This chain is Dual-specificity RNA methyltransferase RlmN, found in Polaromonas naphthalenivorans (strain CJ2).